The primary structure comprises 134 residues: Protein Turandot E (134 aa).

The first 38 residues, 1 to 38 (MSYNRTLHSTTSILKMNSALQISCLLLVLGCLLGSGHG), serve as a signal peptide directing secretion.

This sequence belongs to the Turandot family.

It is found in the secreted. In terms of biological role, a humoral factor that may play a role in stress tolerance. The sequence is that of Protein Turandot E from Drosophila yakuba (Fruit fly).